The following is a 155-amino-acid chain: Large ribosomal subunit protein uL22 (155 aa).

This sequence belongs to the universal ribosomal protein uL22 family. As to quaternary structure, part of the 50S ribosomal subunit. Contacts the macrolide antibiotic tylosin in the polypeptide exit tunnel.

Functionally, this protein binds specifically to 23S rRNA. It makes multiple contacts with different domains of the 23S rRNA in the assembled 50S subunit and ribosome. Contacts all 6 domains of the 23S rRNA, helping stabilize their relative orientation. An extended beta-hairpin in the C-terminus forms part of the polypeptide exit tunnel, in which it helps forms a bend with protein L4, while most of the rest of the protein is located at the polypeptide exit tunnel on the outside of the subunit. The chain is Large ribosomal subunit protein uL22 from Haloarcula marismortui (strain ATCC 43049 / DSM 3752 / JCM 8966 / VKM B-1809) (Halobacterium marismortui).